Reading from the N-terminus, the 181-residue chain is Cyclic AMP-dependent transcription factor ATF-3 (181 aa).

The disordered stretch occupies residues 76–96; that stretch reads VTKSEVAPEEDERKRRRRERN. K78 is covalently cross-linked (Glycyl lysine isopeptide (Lys-Gly) (interchain with G-Cter in SUMO2)). Residues 86 to 149 enclose the bZIP domain; sequence DERKRRRRER…QHLIYMLNLH (64 aa). The tract at residues 88 to 110 is basic motif; it reads RKRRRRERNKIAAAKCRNKKKEK. The tract at residues 114 to 142 is leucine-zipper; it reads LQKESEKLESVNAELKAQIEELKNEKQHL. Position 162 is a phosphothreonine (T162). Residue K175 forms a Glycyl lysine isopeptide (Lys-Gly) (interchain with G-Cter in SUMO2) linkage.

It belongs to the bZIP family. ATF subfamily. In terms of assembly, ATF3 alone can bind DNA, but it preferentially forms heteromeric complexes with JUN and JUNB and does not interact with FOS. As to expression, expressed in tissues containing skeletal muscle or smooth muscle. Expressed in cutaneous and muscular sensory neurons.

It is found in the nucleus. This protein binds the cAMP response element (CRE) (consensus: 5'-GTGACGT[AC][AG]-3'), a sequence present in many viral and cellular promoters. Represses transcription from promoters with ATF sites. It may repress transcription by stabilizing the binding of inhibitory cofactors at the promoter. In Rattus norvegicus (Rat), this protein is Cyclic AMP-dependent transcription factor ATF-3 (Atf3).